Here is a 187-residue protein sequence, read N- to C-terminus: Acetyl-CoA decarbonylase/synthase complex subunit epsilon (187 aa).

M1 bears the Blocked amino end (Met) mark.

This sequence belongs to the CdhB family. As to quaternary structure, heterotetramer of two alpha and two epsilon subunits. The ACDS complex is made up of alpha, epsilon, beta, gamma and delta subunits with a probable stoichiometry of (alpha(2)epsilon(2))(4)-beta(8)-(gamma(1)delta(1))(8).

Its function is as follows. Part of a complex that catalyzes the reversible cleavage of acetyl-CoA, allowing autotrophic growth from CO(2). The alpha-epsilon subcomponent functions as a carbon monoxide dehydrogenase. The precise role of the epsilon subunit is unclear; it may have a stabilizing role within the alpha(2)epsilon(2) component and/or be involved in electron transfer to FAD during a potential FAD-mediated CO oxidation. The sequence is that of Acetyl-CoA decarbonylase/synthase complex subunit epsilon from Methanothrix soehngenii (Methanosaeta concilii).